Reading from the N-terminus, the 598-residue chain is 2-succinyl-5-enolpyruvyl-6-hydroxy-3-cyclohexene-1-carboxylate synthase (598 aa).

Belongs to the TPP enzyme family. MenD subfamily. As to quaternary structure, homodimer. Requires Mg(2+) as cofactor. Mn(2+) is required as a cofactor. It depends on thiamine diphosphate as a cofactor.

The catalysed reaction is isochorismate + 2-oxoglutarate + H(+) = 5-enolpyruvoyl-6-hydroxy-2-succinyl-cyclohex-3-ene-1-carboxylate + CO2. It functions in the pathway quinol/quinone metabolism; 1,4-dihydroxy-2-naphthoate biosynthesis; 1,4-dihydroxy-2-naphthoate from chorismate: step 2/7. The protein operates within cofactor biosynthesis; phylloquinone biosynthesis. Catalyzes the thiamine diphosphate-dependent decarboxylation of 2-oxoglutarate and the subsequent addition of the resulting succinic semialdehyde-thiamine pyrophosphate anion to isochorismate to yield 2-succinyl-5-enolpyruvyl-6-hydroxy-3-cyclohexene-1-carboxylate (SEPHCHC). This Prochlorococcus marinus (strain NATL1A) protein is 2-succinyl-5-enolpyruvyl-6-hydroxy-3-cyclohexene-1-carboxylate synthase.